A 451-amino-acid polypeptide reads, in one-letter code: tRNA modification GTPase MnmE (451 aa).

(6S)-5-formyl-5,6,7,8-tetrahydrofolate contacts are provided by Arg-28, Glu-85, and Lys-124. One can recognise a TrmE-type G domain in the interval 220 to 373; that stretch reads GLYTVLVGPP…LKTRLRTLLL (154 aa). Position 230 (Asn-230) interacts with K(+). GTP-binding positions include 230 to 235, 249 to 255, and 274 to 277; these read NVGKSS, TDVPGTT, and DTAG. Ser-234 serves as a coordination point for Mg(2+). Positions 249, 251, and 254 each coordinate K(+). Thr-255 is a Mg(2+) binding site. Lys-451 is a (6S)-5-formyl-5,6,7,8-tetrahydrofolate binding site.

It belongs to the TRAFAC class TrmE-Era-EngA-EngB-Septin-like GTPase superfamily. TrmE GTPase family. Homodimer. Heterotetramer of two MnmE and two MnmG subunits. Requires K(+) as cofactor.

It is found in the cytoplasm. Exhibits a very high intrinsic GTPase hydrolysis rate. Involved in the addition of a carboxymethylaminomethyl (cmnm) group at the wobble position (U34) of certain tRNAs, forming tRNA-cmnm(5)s(2)U34. This chain is tRNA modification GTPase MnmE, found in Xylella fastidiosa (strain 9a5c).